Reading from the N-terminus, the 450-residue chain is Endosomal transmembrane epsin interactor 1 (450 aa).

A signal peptide spans 1 to 29 (MILLVNLFVLLSVVCVLLNLAGFILGCQG). Residues 30-85 (AQFVSSVPRCDLVDLGEGKICFCCEEFQPAKCTDKENALKLFPVQPCSAVHLLLKK) are Lumenal-facing. A helical membrane pass occupies residues 86–106 (VLFALCALNALTTTVCLVAAA). The Cytoplasmic segment spans residues 107–450 (LRYLQIFATR…LIGVIRETVL (344 aa)). The tract at residues 107-450 (LRYLQIFATR…LIGVIRETVL (344 aa)) is mediates interaction with EPN1. 2 consecutive short sequence motifs (PPxY; mediates interaction with ITCH) follow at residues 148-151 (PPSY) and 194-197 (PPPY). Positions 235-284 (DGDIPNIPAEENASTSTPSSTLVRPIRSRRALPPLRTRSKSDPVLHPSEE) are disordered. Residues 246–256 (NASTSTPSSTL) show a composition bias toward polar residues. Residues 273–284 (SKSDPVLHPSEE) show a composition bias toward basic and acidic residues. Residue lysine 274 forms a Glycyl lysine isopeptide (Lys-Gly) (interchain with G-Cter in ubiquitin) linkage. Position 275 is a phosphoserine (serine 275). Glycyl lysine isopeptide (Lys-Gly) (interchain with G-Cter in ubiquitin) cross-links involve residues lysine 329 and lysine 365.

The protein belongs to the ENTREP family. As to quaternary structure, interacts with ITCH; enhances the ubiquitination of CXCR4 by ITCH and the subsequent endocytosis and desensitization of the receptor. Interacts with EPN1. In terms of processing, monoubiquitinated at Lys-274, Lys-329 and Lys-365 by ITCH. Prominently expressed in muscle.

It is found in the early endosome membrane. It localises to the late endosome membrane. The protein resides in the recycling endosome membrane. Its subcellular location is the cell membrane. Its function is as follows. Functions as an activator of the E3 ubiquitin protein ligase ITCH in the ubiquitination of the CXCL12-activated CXCR4 receptor. Thereby, triggers CXCR4 endocytosis and desensitization, negatively regulating the CXCL12/CXCR4 signaling pathway. The protein is Endosomal transmembrane epsin interactor 1 of Homo sapiens (Human).